We begin with the raw amino-acid sequence, 149 residues long: Arginine regulator (149 aa).

Belongs to the ArgR family.

It is found in the cytoplasm. Its pathway is amino-acid degradation; L-arginine degradation via ADI pathway. In terms of biological role, regulates the transcription of the arc operon, involved in arginine catabolism. The sequence is that of Arginine regulator (argR1) from Bacillus thuringiensis subsp. konkukian (strain 97-27).